Reading from the N-terminus, the 232-residue chain is DnaJ homolog subfamily B member 8 (232 aa).

Residues 3-69 (NYYEVLGVQA…KKRSLYDRAG (67 aa)) enclose the J domain.

In terms of assembly, interacts with histone deacetylases HDAC4, HDAC6, and SIRT2, HDAC activity is required for antiaggregation.

In terms of biological role, efficient suppressor of aggregation and toxicity of disease-associated polyglutamine proteins. The chain is DnaJ homolog subfamily B member 8 (DNAJB8) from Homo sapiens (Human).